The primary structure comprises 481 residues: Keratin, type II cuticular Hb1 (481 aa).

A head region spans residues 1–106 (MTCGSGFCGR…PNAQCVKHEE (106 aa)). The region spanning 106 to 417 (EKEQIKCLNS…RLLEGEEQRL (312 aa)) is the IF rod domain. The interval 107–141 (KEQIKCLNSKFAAFIDKVRFLEQQNKLLETKWQFY) is coil 1A. The interval 142–151 (QNRKCCESNM) is linker 1. The interval 152–252 (EPLFEGYIEA…YDEETRILHS (101 aa)) is coil 1B. Lysine 212 participates in a covalent cross-link: Glycyl lysine isopeptide (Lys-Gly) (interchain with G-Cter in SUMO1). Positions 253 to 269 (HISDTSIVVKMDNSRDL) are linker 12. The segment at 270-413 (NMDCVVAEIK…TTYRRLLEGE (144 aa)) is coil 2. The segment at 414-481 (EQRLCEGVGA…GSAVSCGRKC (68 aa)) is tail.

It belongs to the intermediate filament family. In terms of assembly, heterotetramer of two type I and two type II keratins. As to expression, expressed in dorsal skin.

This chain is Keratin, type II cuticular Hb1, found in Mus musculus (Mouse).